The following is a 166-amino-acid chain: NAD(P)H-quinone oxidoreductase subunit I, chloroplastic (166 aa).

2 consecutive 4Fe-4S ferredoxin-type domains span residues 55 to 84 (GRIH…VDWK) and 95 to 124 (LNYS…MTEE). Residues Cys-64, Cys-67, Cys-70, Cys-74, Cys-104, Cys-107, Cys-110, and Cys-114 each contribute to the [4Fe-4S] cluster site.

This sequence belongs to the complex I 23 kDa subunit family. NDH is composed of at least 16 different subunits, 5 of which are encoded in the nucleus. It depends on [4Fe-4S] cluster as a cofactor.

The protein resides in the plastid. The protein localises to the chloroplast thylakoid membrane. It catalyses the reaction a plastoquinone + NADH + (n+1) H(+)(in) = a plastoquinol + NAD(+) + n H(+)(out). The catalysed reaction is a plastoquinone + NADPH + (n+1) H(+)(in) = a plastoquinol + NADP(+) + n H(+)(out). Functionally, NDH shuttles electrons from NAD(P)H:plastoquinone, via FMN and iron-sulfur (Fe-S) centers, to quinones in the photosynthetic chain and possibly in a chloroplast respiratory chain. The immediate electron acceptor for the enzyme in this species is believed to be plastoquinone. Couples the redox reaction to proton translocation, and thus conserves the redox energy in a proton gradient. The protein is NAD(P)H-quinone oxidoreductase subunit I, chloroplastic of Silphium perfoliatum (Cup plant).